A 969-amino-acid chain; its full sequence is Leucine--tRNA ligase (969 aa).

Positions 1 to 23 (MTESPTTSPATGSGAAAPDSDAP) are disordered. Positions 78–89 (PYPSGEGLHVGH) match the 'HIGH' region motif. The short motif at 737–741 (KIGKS) is the 'KMSKS' region element. Residue K740 coordinates ATP.

The protein belongs to the class-I aminoacyl-tRNA synthetase family.

The protein localises to the cytoplasm. It carries out the reaction tRNA(Leu) + L-leucine + ATP = L-leucyl-tRNA(Leu) + AMP + diphosphate. This Mycolicibacterium paratuberculosis (strain ATCC BAA-968 / K-10) (Mycobacterium paratuberculosis) protein is Leucine--tRNA ligase.